Here is a 395-residue protein sequence, read N- to C-terminus: Immunity-related GTPase family M protein 2 (395 aa).

The IRG-type G domain occupies N63–D239. Residues D72–S79, T97–R101, and K179–D181 each bind GTP.

Belongs to the TRAFAC class dynamin-like GTPase superfamily. IRG family. In terms of processing, ubiquitinated; polyubiquitinated in the cytosol, promoting Gbp1 recruitment to the T.gondii parasitophorous vacuole membranes.

The protein localises to the cytoplasmic vesicle membrane. It is found in the golgi apparatus membrane. It localises to the cytoplasm. The protein resides in the cytosol. It carries out the reaction GTP + H2O = GDP + phosphate + H(+). In terms of biological role, immunity-related GTPase that plays important roles in innate immunity and inflammatory response. Acts as a dynamin-like protein that binds to intracellular membranes and promotes remodeling and trafficking of those membranes. Required for clearance of acute protozoan and bacterial infections. Acts by participating to Tgtp1/Irgb6 and Gbp1-mediated parasite killing by promoting their accumulation on the T.gondii parasitophorous vacuole membranes. Also required for prolonged loading of ubiquitin and p62/Sqstm1 to parasitophorous vacuole membranes. Also acts as a key negative regulator of the inflammatory response by inhibiting the non-canonical inflammasome, thereby protecting against Casp11-driven septic shock during endotoxemia. This is Immunity-related GTPase family M protein 2 from Mus musculus (Mouse).